The chain runs to 316 residues: Transmembrane protein 231 (316 aa).

The chain crosses the membrane as a helical span at residues 23-43 (AALFLLLAAALTYIPPLLVAF). 3 N-linked (GlcNAc...) asparagine glycosylation sites follow: N194, N199, and N221. The helical transmembrane segment at 262–282 (FWEMVKFAWVQYVSILLIFLW) threads the bilayer.

This sequence belongs to the TMEM231 family. As to quaternary structure, part of the tectonic-like complex (also named B9 complex). Interacts with TMEM107.

Its subcellular location is the cell projection. The protein resides in the cilium membrane. In terms of biological role, transmembrane component of the tectonic-like complex, a complex localized at the transition zone of primary cilia and acting as a barrier that prevents diffusion of transmembrane proteins between the cilia and plasma membranes. Required for ciliogenesis and sonic hedgehog/SHH signaling. This Homo sapiens (Human) protein is Transmembrane protein 231 (TMEM231).